Here is a 228-residue protein sequence, read N- to C-terminus: Phosphoglycolate phosphatase (228 aa).

Asp12 acts as the Nucleophile in catalysis. Mg(2+)-binding residues include Asp12, Asp14, and Asp177.

It belongs to the HAD-like hydrolase superfamily. CbbY/CbbZ/Gph/YieH family. It depends on Mg(2+) as a cofactor.

It carries out the reaction 2-phosphoglycolate + H2O = glycolate + phosphate. It participates in organic acid metabolism; glycolate biosynthesis; glycolate from 2-phosphoglycolate: step 1/1. In terms of biological role, specifically catalyzes the dephosphorylation of 2-phosphoglycolate. Is involved in the dissimilation of the intracellular 2-phosphoglycolate formed during the DNA repair of 3'-phosphoglycolate ends, a major class of DNA lesions induced by oxidative stress. The chain is Phosphoglycolate phosphatase from Vibrio parahaemolyticus serotype O3:K6 (strain RIMD 2210633).